The following is a 123-amino-acid chain: Small ribosomal subunit protein uS12 (123 aa).

D89 is subject to 3-methylthioaspartic acid.

Belongs to the universal ribosomal protein uS12 family. In terms of assembly, part of the 30S ribosomal subunit. Contacts proteins S8 and S17. May interact with IF1 in the 30S initiation complex.

Functionally, with S4 and S5 plays an important role in translational accuracy. In terms of biological role, interacts with and stabilizes bases of the 16S rRNA that are involved in tRNA selection in the A site and with the mRNA backbone. Located at the interface of the 30S and 50S subunits, it traverses the body of the 30S subunit contacting proteins on the other side and probably holding the rRNA structure together. The combined cluster of proteins S8, S12 and S17 appears to hold together the shoulder and platform of the 30S subunit. This Syntrophotalea carbinolica (strain DSM 2380 / NBRC 103641 / GraBd1) (Pelobacter carbinolicus) protein is Small ribosomal subunit protein uS12.